The following is a 368-amino-acid chain: Histidinol-phosphate aminotransferase (368 aa).

N6-(pyridoxal phosphate)lysine is present on lysine 215.

Belongs to the class-II pyridoxal-phosphate-dependent aminotransferase family. Histidinol-phosphate aminotransferase subfamily. Homodimer. Pyridoxal 5'-phosphate is required as a cofactor.

It catalyses the reaction L-histidinol phosphate + 2-oxoglutarate = 3-(imidazol-4-yl)-2-oxopropyl phosphate + L-glutamate. The protein operates within amino-acid biosynthesis; L-histidine biosynthesis; L-histidine from 5-phospho-alpha-D-ribose 1-diphosphate: step 7/9. This is Histidinol-phosphate aminotransferase (hisC) from Buchnera aphidicola subsp. Acyrthosiphon pisum (strain APS) (Acyrthosiphon pisum symbiotic bacterium).